The primary structure comprises 530 residues: C2H2-type transcription factor MSN2 (530 aa).

2 consecutive C2H2-type zinc fingers follow at residues 409–432 (FVCDLCNRRFRRQEHLKRHYRSLH) and 438–460 (FECNECGKKFSRSDNLAQHARTH).

It is found in the nucleus. The protein localises to the cytoplasm. Transcription factor that acts as a key downstream transcription factor in the HOG1-MAPK pathway. Plays crucial roles in the regulation of conidiation, virulence and multi-stress responses. In addition to regulating the expression of genes specifically involved in stress-response, conidiation and virulence, controls also expression of cellular signaling factors. This is C2H2-type transcription factor MSN2 from Metarhizium robertsii (strain ARSEF 23 / ATCC MYA-3075) (Metarhizium anisopliae (strain ARSEF 23)).